Reading from the N-terminus, the 299-residue chain is UDP-N-acetylenolpyruvoylglucosamine reductase (299 aa).

The region spanning 19–192 (LGGQALAEVR…AAVTLQLRRS (174 aa)) is the FAD-binding PCMH-type domain. Residue Arg169 is part of the active site. The active-site Proton donor is the Cys221. The active site involves Glu292.

This sequence belongs to the MurB family. FAD serves as cofactor.

The protein localises to the cytoplasm. The enzyme catalyses UDP-N-acetyl-alpha-D-muramate + NADP(+) = UDP-N-acetyl-3-O-(1-carboxyvinyl)-alpha-D-glucosamine + NADPH + H(+). Its pathway is cell wall biogenesis; peptidoglycan biosynthesis. Functionally, cell wall formation. The chain is UDP-N-acetylenolpyruvoylglucosamine reductase from Oleidesulfovibrio alaskensis (strain ATCC BAA-1058 / DSM 17464 / G20) (Desulfovibrio alaskensis).